The following is a 2609-amino-acid chain: Mycosubtilin synthase subunit C (2609 aa).

The interval 258-1628 (PREKTIHQLF…RVCAQPEMTV (1371 aa)) is domain 1 (D-serine-activating). The tract at residues 288-695 (TYQELNEKAN…HIPSIQESIV (408 aa)) is adenylation 1. The 75-residue stretch at 771 to 845 (APRTELEKIL…ELVPYVEPVT (75 aa)) folds into the Carrier 1 domain. The residue at position 806 (S806) is an O-(pantetheine 4'-phosphoryl)serine. Positions 853-1312 (IKGPALLTPI…EISIDELDQF (460 aa)) are epimerization 1. Residues 1322–1623 (IENIYPLTPM…NTIPVRVCAQ (302 aa)) form a condensation 1 region. A domain 2 (isoleucine-activating) region spans residues 1778 to 2359 (PKEKTIYQLF…AHAIQAAALP (582 aa)). Residues 1808 to 2205 (TYRQLNEQAN…LVESVKEAVV (398 aa)) are adenylation 2. Residues 2282–2357 (APRTLIEKQL…TMAHAIQAAA (76 aa)) form the Carrier 2 domain. S2317 bears the O-(pantetheine 4'-phosphoryl)serine mark. Residues 2375-2581 (IPVFCFPPLI…ENMSTIRSIM (207 aa)) form a thioesterase region.

It belongs to the ATP-dependent AMP-binding enzyme family. It depends on pantetheine 4'-phosphate as a cofactor.

In terms of biological role, this protein is a multifunctional enzyme, able to activate and polymerize the amino acids Ser and Asn as part of the synthesis of mycosubtilin. The Ser residue is further epimerized to the D-isomer form. The activation sites for these amino acids consist of individual domains. The sequence is that of Mycosubtilin synthase subunit C (mycC) from Bacillus subtilis.